The sequence spans 105 residues: Protein S100-A11 (105 aa).

Met1 is subject to N-acetylmethionine. Residue Ala2 is modified to N-acetylalanine; in Protein S100-A11, N-terminally processed. Position 3 is an N6-acetyllysine (Lys3). Phosphoserine is present on residues Ser5 and Ser6. Thr10 is modified (phosphothreonine). EF-hand domains follow at residues 13 to 49 and 55 to 90; these read CIESLIAVFQKYAGKDGYNYTLSKTEFLSFMNTELAA and KDPGVLDRMMKKLDTNSDGQLDFSEFLNLIGGLAMA. Lys27 is subject to N6-acetyllysine. The Ca(2+) site is built by Thr33, Glu38, Asp68, Asn70, Asp72, Gln74, and Glu79.

Belongs to the S-100 family. Homodimer; disulfide-linked. Post-translationally, phosphorylation at Thr-10 by PRKCA significantly suppresses homodimerization and promotes association with NCL/nucleolin which induces nuclear translocation.

The protein localises to the cytoplasm. It localises to the nucleus. In terms of biological role, facilitates the differentiation and the cornification of keratinocytes. This chain is Protein S100-A11 (S100A11), found in Homo sapiens (Human).